Reading from the N-terminus, the 164-residue chain is ATP synthase subunit b (164 aa).

The chain crosses the membrane as a helical span at residues 10 to 32 (SAAMLMLFVLMVYFLNKFLYTPF).

Belongs to the ATPase B chain family. F-type ATPases have 2 components, F(1) - the catalytic core - and F(0) - the membrane proton channel. F(1) has five subunits: alpha(3), beta(3), gamma(1), delta(1), epsilon(1). F(0) has three main subunits: a(1), b(2) and c(10-14). The alpha and beta chains form an alternating ring which encloses part of the gamma chain. F(1) is attached to F(0) by a central stalk formed by the gamma and epsilon chains, while a peripheral stalk is formed by the delta and b chains.

Its subcellular location is the cell inner membrane. Its function is as follows. F(1)F(0) ATP synthase produces ATP from ADP in the presence of a proton or sodium gradient. F-type ATPases consist of two structural domains, F(1) containing the extramembraneous catalytic core and F(0) containing the membrane proton channel, linked together by a central stalk and a peripheral stalk. During catalysis, ATP synthesis in the catalytic domain of F(1) is coupled via a rotary mechanism of the central stalk subunits to proton translocation. Component of the F(0) channel, it forms part of the peripheral stalk, linking F(1) to F(0). This is ATP synthase subunit b from Thermotoga maritima (strain ATCC 43589 / DSM 3109 / JCM 10099 / NBRC 100826 / MSB8).